Consider the following 858-residue polypeptide: Leucine--tRNA ligase (858 aa).

The 'HIGH' region signature appears at 42–52; it reads PYPSGRLHMGH. Residues 618–622 carry the 'KMSKS' region motif; sequence KMSKS. Residue Lys-621 participates in ATP binding.

This sequence belongs to the class-I aminoacyl-tRNA synthetase family.

The protein resides in the cytoplasm. The catalysed reaction is tRNA(Leu) + L-leucine + ATP = L-leucyl-tRNA(Leu) + AMP + diphosphate. The sequence is that of Leucine--tRNA ligase from Aliivibrio fischeri (strain MJ11) (Vibrio fischeri).